A 178-amino-acid polypeptide reads, in one-letter code: N-alpha-acetyltransferase 20 (178 aa).

An N-acetyltransferase domain is found at 2–157 (TSLRPFTCDD…DAYDMRKALS (156 aa)). Residues 159 to 178 (DTEKKSIVPLPHPVRPEDIE) form a disordered region.

This sequence belongs to the acetyltransferase family. ARD1 subfamily. In terms of assembly, component of the N-terminal acetyltransferase B (NatB) complex which is composed of naa20 and naa25.

It localises to the cytoplasm. The protein resides in the nucleus. The catalysed reaction is N-terminal L-methionyl-L-asparaginyl-[protein] + acetyl-CoA = N-terminal N(alpha)-acetyl-L-methionyl-L-asparaginyl-[protein] + CoA + H(+). The enzyme catalyses N-terminal L-methionyl-L-glutaminyl-[protein] + acetyl-CoA = N-terminal N(alpha)-acetyl-L-methionyl-L-glutaminyl-[protein] + CoA + H(+). It catalyses the reaction N-terminal L-methionyl-L-aspartyl-[protein] + acetyl-CoA = N-terminal N(alpha)-acetyl-L-methionyl-L-aspartyl-[protein] + CoA + H(+). It carries out the reaction N-terminal L-methionyl-L-glutamyl-[protein] + acetyl-CoA = N-terminal N(alpha)-acetyl-L-methionyl-L-glutamyl-[protein] + CoA + H(+). In terms of biological role, catalytic subunit of the NatB complex which catalyzes acetylation of the N-terminal methionine residues of peptides beginning with Met-Asp, Met-Glu, Met-Asn and Met-Gln. Proteins with cell cycle functions are overrepresented in the pool of NatB substrates. Required for maintaining the structure and function of actomyosin fibers and for proper cellular migration. The sequence is that of N-alpha-acetyltransferase 20 (naa20) from Xenopus tropicalis (Western clawed frog).